Consider the following 219-residue polypeptide: Large ribosomal subunit protein uL3 (219 aa).

Disordered regions lie at residues 62–81 (DSRSSKYANKPAEGHAKKAG) and 136–156 (QARGPMSHGSHFHRAPGSVGM).

Belongs to the universal ribosomal protein uL3 family. Part of the 50S ribosomal subunit. Forms a cluster with proteins L14 and L19.

One of the primary rRNA binding proteins, it binds directly near the 3'-end of the 23S rRNA, where it nucleates assembly of the 50S subunit. The sequence is that of Large ribosomal subunit protein uL3 from Staphylococcus saprophyticus subsp. saprophyticus (strain ATCC 15305 / DSM 20229 / NCIMB 8711 / NCTC 7292 / S-41).